Here is a 36-residue protein sequence, read N- to C-terminus: Thrombin-like enzyme TLP (36 aa).

The 36-residue stretch at Ile1 to Val36 folds into the Peptidase S1 domain.

Belongs to the peptidase S1 family. Snake venom subfamily. Monomer. In terms of tissue distribution, expressed by the venom gland.

Its subcellular location is the secreted. Functionally, thrombin-like snake venom serine protease. Shows strong hydrolytic activity towards Boc-Asp(oBzl)-Pro-Arg-MCA, a synthetic substrate for thrombin. In Naja naja (Indian cobra), this protein is Thrombin-like enzyme TLP.